We begin with the raw amino-acid sequence, 529 residues long: MSNAPFMQEVARRRTFAIISHPDAGKTTITEKVLLFGQAIQTAGTVKGRGSNQHAKSDWMEMEKQRGISITTSVMQFPYRGSLVNLLDTPGHEDFSEDTYRTLTAVDCCLMVIDAAKGVEDRTRKLMEVTRLRDTPILTFMNKLDRDIRDPMEVMDEVESELKIACAPITWPVGCGKLFKGVYHLYKDETYLYQSGKGHTIQEVRIVKGLGNPELDAAIGDELAAQLRDELELVQGASHEFDRDAFLNGKLSPVFFGTALGNFGVDHMLDGLVEWAPSPMPRNTDLRTVTATDEKFTGFVFKIQANMDPKHRDRVAFMRVVSGKYEKGMKLRQVRTGKDVVIADALTFMAGDRSHVEEAYPGDIIGLHNHGTIQIGDTFTQGENMKFTGIPNFAPELFRRIRLRDPLKQKQLLKGLVQLSEEGAVQVFRPVHNNDLIVGAVGVLQFDVVVARLKSEYNVEAIYEAINVSTARWVECDDVKKFDEFQRKNEINLALDGGDNLTYIAPTMVNLNITQERYPDVVFRKTREH.

The tr-type G domain occupies 11 to 280 (ARRRTFAIIS…GLVEWAPSPM (270 aa)). GTP-binding positions include 20–27 (SHPDAGKT), 88–92 (DTPGH), and 142–145 (NKLD).

This sequence belongs to the TRAFAC class translation factor GTPase superfamily. Classic translation factor GTPase family. PrfC subfamily.

The protein resides in the cytoplasm. Functionally, increases the formation of ribosomal termination complexes and stimulates activities of RF-1 and RF-2. It binds guanine nucleotides and has strong preference for UGA stop codons. It may interact directly with the ribosome. The stimulation of RF-1 and RF-2 is significantly reduced by GTP and GDP, but not by GMP. This is Peptide chain release factor 3 from Erwinia tasmaniensis (strain DSM 17950 / CFBP 7177 / CIP 109463 / NCPPB 4357 / Et1/99).